The following is a 262-amino-acid chain: MDDGYASVMPANAYNWTAVWRRNYLAWRKVALASLLGNLADPITNLFGLGFGLGLIVGRVEGTSYIAFLAAGMVAISAMTSATFETLYAAFARMDVKRTWEGILFTQLTLGDIVLGELVWAASKSVLAGTAIGIVAATLGYASWTSVLCAIPTIALTGLVFASLAMVVISLAPTYDYFVFYQSLVLTPMVFLCGAVFPTSQMPDSFQHFAGLLPLAHSVDLIRPVMLERGADNAALHVGALCVYAVLPFFASIALFRRRLLR.

The ABC transmembrane type-2 domain occupies 33–259 (ASLLGNLADP…FASIALFRRR (227 aa)). 7 helical membrane passes run 37-57 (GNLA…GLIV), 64-84 (SYIA…SATF), 102-122 (GILF…VWAA), 125-145 (SVLA…ASWT), 149-169 (CAIP…MVVI), 177-197 (YFVF…GAVF), and 236-256 (LHVG…IALF).

Belongs to the ABC-2 integral membrane protein family. Lipooligosaccharide exporter (TC 3.A.1.102) subfamily. In terms of assembly, the complex is composed of two ATP-binding proteins (NodI) and two transmembrane proteins (NodJ).

It is found in the cell inner membrane. In terms of biological role, part of the ABC transporter complex NodIJ involved in the export of the nodulation factors (Nod factors), the bacterial signal molecules that induce symbiosis and subsequent nodulation induction. Nod factors are LCO (lipo-chitin oligosaccharide), a modified beta-1,4-linked N-acetylglucosamine oligosaccharide. This subunit encodes the transporter. The protein is Nodulation protein J (nodJ) of Bradyrhizobium diazoefficiens (strain JCM 10833 / BCRC 13528 / IAM 13628 / NBRC 14792 / USDA 110).